The chain runs to 447 residues: Probable 3-deoxy-D-manno-octulosonic acid transferase, mitochondrial (447 aa).

Residues 1-32 (MKLGVFVYRLYRALTYGVSPLIHLHIRWRRLR) constitute a mitochondrion transit peptide. Catalysis depends on glutamate 66, which acts as the Proton acceptor. CMP is bound by residues 278-279 (PR), 320-322 (LGE), and 347-350 (NLSE).

Belongs to the glycosyltransferase group 1 family. Glycosyltransferase 30 subfamily. As to expression, expressed in leaves, stems and flowers.

The protein localises to the mitochondrion. The catalysed reaction is lipid IVA (E. coli) + CMP-3-deoxy-beta-D-manno-octulosonate = alpha-Kdo-(2-&gt;6)-lipid IVA (E. coli) + CMP + H(+). The enzyme catalyses alpha-Kdo-(2-&gt;6)-lipid IVA (E. coli) + CMP-3-deoxy-beta-D-manno-octulosonate = alpha-Kdo-(2-&gt;4)-alpha-Kdo-(2-&gt;6)-lipid IVA (E. coli) + CMP + H(+). Its pathway is glycolipid biosynthesis; KDO(2)-lipid A biosynthesis; KDO(2)-lipid A from CMP-3-deoxy-D-manno-octulosonate and lipid IV(A): step 1/4. It participates in glycolipid biosynthesis; KDO(2)-lipid A biosynthesis; KDO(2)-lipid A from CMP-3-deoxy-D-manno-octulosonate and lipid IV(A): step 2/4. Functionally, involved in the biosynthesis of lipid A, a phosphorylated glycolipid that in bacteria anchors the lipopolysaccharide to the outer membrane of the cell. Catalyzes the transfer of two 3-deoxy-D-manno-octulosonate (Kdo) residues from CMP-Kdo to lipid IV(A), the tetraacyldisaccharide-1,4'-bisphosphate precursor of lipid A. Lipid A-like molecules in plants may serve as structural components of the outer membranes of mitochondria and/or chloroplasts, or may be involved in signal transduction or plant defense responses. The polypeptide is Probable 3-deoxy-D-manno-octulosonic acid transferase, mitochondrial (KDTA) (Arabidopsis thaliana (Mouse-ear cress)).